Consider the following 473-residue polypeptide: tRNA-2-methylthio-N(6)-dimethylallyladenosine synthase (473 aa).

An MTTase N-terminal domain is found at 3-120; the sequence is MKLHVKTWGC…LPEMIKEVQE (118 aa). Residues Cys-12, Cys-49, Cys-83, Cys-157, Cys-161, and Cys-164 each coordinate [4Fe-4S] cluster. Positions 143–375 constitute a Radical SAM core domain; it reads KADGATAFVS…QDRIQQQSQG (233 aa). The TRAM domain occupies 378-441; the sequence is RKMVGSVQRI…TNSIRGKFIR (64 aa).

Belongs to the methylthiotransferase family. MiaB subfamily. Monomer. [4Fe-4S] cluster serves as cofactor.

It is found in the cytoplasm. The enzyme catalyses N(6)-dimethylallyladenosine(37) in tRNA + (sulfur carrier)-SH + AH2 + 2 S-adenosyl-L-methionine = 2-methylsulfanyl-N(6)-dimethylallyladenosine(37) in tRNA + (sulfur carrier)-H + 5'-deoxyadenosine + L-methionine + A + S-adenosyl-L-homocysteine + 2 H(+). Catalyzes the methylthiolation of N6-(dimethylallyl)adenosine (i(6)A), leading to the formation of 2-methylthio-N6-(dimethylallyl)adenosine (ms(2)i(6)A) at position 37 in tRNAs that read codons beginning with uridine. The sequence is that of tRNA-2-methylthio-N(6)-dimethylallyladenosine synthase from Psychromonas ingrahamii (strain DSM 17664 / CCUG 51855 / 37).